The following is a 148-amino-acid chain: Urease accessory protein UreE (148 aa).

It belongs to the UreE family.

It localises to the cytoplasm. Involved in urease metallocenter assembly. Binds nickel. Probably functions as a nickel donor during metallocenter assembly. This is Urease accessory protein UreE from Geobacillus kaustophilus (strain HTA426).